A 506-amino-acid chain; its full sequence is Sugar transport protein 5 (506 aa).

The Cytoplasmic segment spans residues 1-19 (MAGGGLALDVSSAGNIDAK). 12 consecutive transmembrane segments (helical) span residues 20–40 (ITAA…IFGY), 81–101 (LLTA…LVAS), 117–137 (GFTF…AMLI), 141–161 (ILLG…LSEV), 168–188 (GAFN…ANLI), 201–221 (ISLG…LFIS), 287–307 (LVVA…VNAF), 325–345 (IATF…TMVI), 352–372 (FLFI…AVLL), 390–410 (VTVV…WGPL), 430–450 (LSVA…LATL), and 456–476 (GAFL…IMFL). The Cytoplasmic portion of the chain corresponds to 477-506 (PETKGIPVDSMYQVWEKHWYWQRFTKPTST).

Belongs to the major facilitator superfamily. Sugar transporter (TC 2.A.1.1) family.

The protein localises to the membrane. Functionally, mediates an active uptake of hexoses, probably by sugar/hydrogen symport. The sequence is that of Sugar transport protein 5 (STP5) from Arabidopsis thaliana (Mouse-ear cress).